A 308-amino-acid chain; its full sequence is Ectoine dioxygenase (308 aa).

Residue Q131 coordinates L-ectoine. Residue K137 coordinates 2-oxoglutarate. 3 residues coordinate Fe cation: H148, D150, and H249.

Belongs to the PhyH family. EctD subfamily. Homodimer. Requires Fe(2+) as cofactor.

It catalyses the reaction L-ectoine + 2-oxoglutarate + O2 = 5-hydroxyectoine + succinate + CO2. In terms of biological role, involved in the biosynthesis of 5-hydroxyectoine, called compatible solute, which helps organisms to survive extreme osmotic stress by acting as a highly soluble organic osmolyte. Catalyzes the 2-oxoglutarate-dependent selective hydroxylation of L-ectoine to yield (4S,5S)-5-hydroxyectoine. The chain is Ectoine dioxygenase from Bordetella parapertussis (strain 12822 / ATCC BAA-587 / NCTC 13253).